A 172-amino-acid chain; its full sequence is Shikimate kinase (172 aa).

ATP is bound at residue 11 to 16 (GTGKTA). Thr15 provides a ligand contact to Mg(2+). Asp33, Arg57, and Gly79 together coordinate substrate. Arg117 contacts ATP. Arg136 provides a ligand contact to substrate.

It belongs to the shikimate kinase family. In terms of assembly, monomer. It depends on Mg(2+) as a cofactor.

The protein resides in the cytoplasm. It carries out the reaction shikimate + ATP = 3-phosphoshikimate + ADP + H(+). The protein operates within metabolic intermediate biosynthesis; chorismate biosynthesis; chorismate from D-erythrose 4-phosphate and phosphoenolpyruvate: step 5/7. Its function is as follows. Catalyzes the specific phosphorylation of the 3-hydroxyl group of shikimic acid using ATP as a cosubstrate. The protein is Shikimate kinase of Pelotomaculum thermopropionicum (strain DSM 13744 / JCM 10971 / SI).